The sequence spans 438 residues: MAALVVSGAAEQGGRDGPGRGRAPRGRVANQIPPEILKNPQLQAAIRVLPSNYNFEIPKTIWRIQQAQAKKVALQMPEGLLLFACTIVDILERFTEAEVMVMGDVTYGACCVDDFTARALGADFLVHYGHSCLIPMDTSAQDFRVLYVFVDIRIDTTHLLDSLRLTFPPATALALVSTIQFVSTLQAAAQELKAEYRVSVPQCKPLSPGEILGCTSPRLSKEVEAVVYLGDGRFHLESVMIANPNVPAYRYDPYSKVLSREHYDHQRMQAARQEAIATARSAKSWGLILGTLGRQGSPKILEHLESRLRALGLSFVRLLLSEIFPSKLSLLPEVDVWVQVACPRLSIDWGTAFPKPLLTPYEAAVALRDISWQQPYPMDFYAGSSLGPWTVNHGQDRRPHAPGRPARGKVQEGSARPPSAVACEDCSCRDEKVAPLAP.

The segment at 7–29 is disordered; it reads SGAAEQGGRDGPGRGRAPRGRVA. [4Fe-4S] cluster is bound by residues Cys110, Cys214, and Cys342. The tract at residues 391–421 is disordered; it reads VNHGQDRRPHAPGRPARGKVQEGSARPPSAV.

Belongs to the DPH1/DPH2 family. DPH1 subfamily. As to quaternary structure, component of the 2-(3-amino-3-carboxypropyl)histidine synthase complex composed of DPH1, DPH2, DPH3 and a NADH-dependent reductase. Interacts with DPH2. Interacts with RBM8A. It depends on [4Fe-4S] cluster as a cofactor. As to expression, expressed in heart, brain, placenta, lung, liver, skeletal muscle, kidney, pancreas, spleen, thymus, mammary gland, colon, small intestine, testis and ovary. Reduced expression in primary breast and ovarian tumors.

It localises to the nucleus. The protein resides in the cytoplasm. The catalysed reaction is L-histidyl-[translation elongation factor 2] + S-adenosyl-L-methionine = 2-[(3S)-amino-3-carboxypropyl]-L-histidyl-[translation elongation factor 2] + S-methyl-5'-thioadenosine + H(+). It participates in protein modification; peptidyl-diphthamide biosynthesis. Its function is as follows. Catalyzes the first step of diphthamide biosynthesis, a post-translational modification of histidine which occurs in elongation factor 2. DPH1 and DPH2 transfer a 3-amino-3-carboxypropyl (ACP) group from S-adenosyl-L-methionine (SAM) to a histidine residue, the reaction is assisted by a reduction system comprising DPH3 and a NADH-dependent reductase. Acts as a tumor suppressor. The chain is 2-(3-amino-3-carboxypropyl)histidine synthase subunit 1 from Homo sapiens (Human).